Consider the following 194-residue polypeptide: Glycerol-3-phosphate acyltransferase (194 aa).

Helical transmembrane passes span 4-24 (ELIL…LLLA), 80-100 (WVAA…FLGF), 112-132 (VFLG…IGIV), 137-157 (YISL…AAVE), and 161-181 (LLVG…RENI).

It belongs to the PlsY family. In terms of assembly, probably interacts with PlsX.

It is found in the cell inner membrane. It catalyses the reaction an acyl phosphate + sn-glycerol 3-phosphate = a 1-acyl-sn-glycero-3-phosphate + phosphate. It participates in lipid metabolism; phospholipid metabolism. In terms of biological role, catalyzes the transfer of an acyl group from acyl-phosphate (acyl-PO(4)) to glycerol-3-phosphate (G3P) to form lysophosphatidic acid (LPA). This enzyme utilizes acyl-phosphate as fatty acyl donor, but not acyl-CoA or acyl-ACP. In Geobacter sulfurreducens (strain ATCC 51573 / DSM 12127 / PCA), this protein is Glycerol-3-phosphate acyltransferase.